A 57-amino-acid polypeptide reads, in one-letter code: UPF0391 membrane protein bsl6560 (57 aa).

2 helical membrane-spanning segments follow: residues 4-24 and 30-50; these read WVVT…GGIA and IAKI…VVGL.

This sequence belongs to the UPF0391 family.

The protein resides in the cell membrane. In Bradyrhizobium diazoefficiens (strain JCM 10833 / BCRC 13528 / IAM 13628 / NBRC 14792 / USDA 110), this protein is UPF0391 membrane protein bsl6560.